We begin with the raw amino-acid sequence, 1224 residues long: DNA-directed RNA polymerase subunit beta'' (1224 aa).

The Zn(2+) site is built by C223, C297, C304, and C307.

This sequence belongs to the RNA polymerase beta' chain family. RpoC2 subfamily. In plastids the minimal PEP RNA polymerase catalytic core is composed of four subunits: alpha, beta, beta', and beta''. When a (nuclear-encoded) sigma factor is associated with the core the holoenzyme is formed, which can initiate transcription. Zn(2+) is required as a cofactor.

The protein localises to the plastid. It localises to the chloroplast. The catalysed reaction is RNA(n) + a ribonucleoside 5'-triphosphate = RNA(n+1) + diphosphate. In terms of biological role, DNA-dependent RNA polymerase catalyzes the transcription of DNA into RNA using the four ribonucleoside triphosphates as substrates. In Porphyra purpurea (Red seaweed), this protein is DNA-directed RNA polymerase subunit beta''.